The sequence spans 637 residues: tRNA uridine 5-carboxymethylaminomethyl modification enzyme MnmG (637 aa).

FAD contacts are provided by residues 15–20, isoleucine 127, and serine 182; that span reads GAGHAG. 276 to 290 lines the NAD(+) pocket; sequence GPRYCPSIEDKIVRF. Glutamine 373 provides a ligand contact to FAD.

The protein belongs to the MnmG family. As to quaternary structure, homodimer. Heterotetramer of two MnmE and two MnmG subunits. The cofactor is FAD.

It is found in the cytoplasm. NAD-binding protein involved in the addition of a carboxymethylaminomethyl (cmnm) group at the wobble position (U34) of certain tRNAs, forming tRNA-cmnm(5)s(2)U34. The chain is tRNA uridine 5-carboxymethylaminomethyl modification enzyme MnmG from Streptococcus pneumoniae serotype 4 (strain ATCC BAA-334 / TIGR4).